Consider the following 538-residue polypeptide: NAD(P)H-quinone oxidoreductase chain 4 (538 aa).

14 helical membrane-spanning segments follow: residues Phe-11–Ile-31, Tyr-43–Phe-63, Met-95–Val-115, Pro-119–Val-139, Leu-143–Trp-163, Phe-175–Phe-195, Gly-217–Val-237, Thr-251–Leu-271, Phe-285–Phe-305, Ile-314–Ser-334, Ala-340–Ala-360, Ile-382–Ile-404, Ile-425–Met-445, and Ile-472–Met-492.

Belongs to the complex I subunit 4 family.

The protein localises to the cellular thylakoid membrane. It catalyses the reaction a plastoquinone + NADH + (n+1) H(+)(in) = a plastoquinol + NAD(+) + n H(+)(out). It carries out the reaction a plastoquinone + NADPH + (n+1) H(+)(in) = a plastoquinol + NADP(+) + n H(+)(out). Its function is as follows. NDH-1 shuttles electrons from NAD(P)H, via FMN and iron-sulfur (Fe-S) centers, to quinones in the respiratory chain. The immediate electron acceptor for the enzyme in this species is believed to be plastoquinone. Couples the redox reaction to proton translocation (for every two electrons transferred, four hydrogen ions are translocated across the cytoplasmic membrane), and thus conserves the redox energy in a proton gradient. This Prochlorococcus marinus (strain NATL2A) protein is NAD(P)H-quinone oxidoreductase chain 4.